The following is a 739-amino-acid chain: Probable beta-glucosidase L (739 aa).

The signal sequence occupies residues 1–17; sequence MQTLFLSLLAAAVTVHA. Asn40 and Asn224 each carry an N-linked (GlcNAc...) asparagine glycan. The active site involves Asp252. Residue Asn398 is glycosylated (N-linked (GlcNAc...) asparagine).

The protein belongs to the glycosyl hydrolase 3 family.

It is found in the secreted. The enzyme catalyses Hydrolysis of terminal, non-reducing beta-D-glucosyl residues with release of beta-D-glucose.. Its pathway is glycan metabolism; cellulose degradation. In terms of biological role, beta-glucosidases are one of a number of cellulolytic enzymes involved in the degradation of cellulosic biomass. Catalyzes the last step releasing glucose from the inhibitory cellobiose. The polypeptide is Probable beta-glucosidase L (bglL) (Aspergillus fumigatus (strain CBS 144.89 / FGSC A1163 / CEA10) (Neosartorya fumigata)).